The following is a 208-amino-acid chain: Ribonuclease HII (208 aa).

The RNase H type-2 domain occupies 17 to 208 (LRVCGIDEAG…SFRLRQLGEK (192 aa)). A divalent metal cation contacts are provided by Asp-23, Glu-24, and Asp-120.

Belongs to the RNase HII family. It depends on Mn(2+) as a cofactor. Mg(2+) is required as a cofactor.

The protein resides in the cytoplasm. The enzyme catalyses Endonucleolytic cleavage to 5'-phosphomonoester.. Its function is as follows. Endonuclease that specifically degrades the RNA of RNA-DNA hybrids. This is Ribonuclease HII from Chlorobium luteolum (strain DSM 273 / BCRC 81028 / 2530) (Pelodictyon luteolum).